Consider the following 364-residue polypeptide: Very-long-chain (3R)-3-hydroxyacyl-CoA dehydratase 3 (364 aa).

Residues 1-151 lie on the Cytoplasmic side of the membrane; sequence MAMENQVLTP…ETLTNLRKGY (151 aa). The 90-residue stretch at 7–96 folds into the CS domain; sequence VLTPHVYWAQ…KVSQWWERLT (90 aa). T9 carries the phosphothreonine modification. Residues 113–138 adopt a coiled-coil conformation; that stretch reads LDESDAEMELRAKEEERLNKLRLESE. 2 positions are modified to phosphoserine: S116 and S137. The helical transmembrane segment at 152 to 172 threads the bilayer; the sequence is LFMYNLVQFLGFSWIFVNLTV. The Lumenal portion of the chain corresponds to 173–191; that stretch reads RFCILGKESFYDTFHTVAD. A helical transmembrane segment spans residues 192 to 212; that stretch reads MMYFCQMLAVVETINAAIGVT. At 213–214 the chain is on the cytoplasmic side; it reads TS. A helical membrane pass occupies residues 215 to 235; sequence PVLPSLIQLLGRNFILFIIFG. Topologically, residues 236–244 are lumenal; sequence TMEEMQNKA. Residues 245-265 form a helical membrane-spanning segment; the sequence is VVFFVFYLWSAIEIFRYSFYM. Residues 266–282 lie on the Cytoplasmic side of the membrane; that stretch reads LTCIDMDWEVLTWLRYT. Residues 283-303 form a helical membrane-spanning segment; it reads LWIPLYPLGCLAEAVSVVQSI. Active-site residues include Y288 and E295. Residues 304–324 lie on the Lumenal side of the membrane; that stretch reads PIFNETGRFSFTLPYPVKIKV. The chain crosses the membrane as a helical span at residues 325 to 345; that stretch reads RFSFFLQIYLIMIFLGLYINF. At 346–364 the chain is on the cytoplasmic side; it reads RHLYKQRRRRYGQKKKKIH.

The protein belongs to the very long-chain fatty acids dehydratase HACD family. As to quaternary structure, may interact with enzymes of the ELO family (including ELOVL1); with those enzymes that mediate condensation, the first of the four steps of the reaction cycle responsible for fatty acids elongation, may be part of a larger fatty acids elongase complex. Interacts with RAC1.

Its subcellular location is the endoplasmic reticulum membrane. The catalysed reaction is a very-long-chain (3R)-3-hydroxyacyl-CoA = a very-long-chain (2E)-enoyl-CoA + H2O. It catalyses the reaction (3R)-hydroxyhexadecanoyl-CoA = (2E)-hexadecenoyl-CoA + H2O. It participates in lipid metabolism; fatty acid biosynthesis. Catalyzes the third of the four reactions of the long-chain fatty acids elongation cycle. This endoplasmic reticulum-bound enzymatic process, allows the addition of two carbons to the chain of long- and very long-chain fatty acids/VLCFAs per cycle. This enzyme catalyzes the dehydration of the 3-hydroxyacyl-CoA intermediate into trans-2,3-enoyl-CoA, within each cycle of fatty acid elongation. Thereby, it participates in the production of VLCFAs of different chain lengths that are involved in multiple biological processes as precursors of membrane lipids and lipid mediators. Involved in Rac1-signaling pathways leading to the modulation of gene expression. This is Very-long-chain (3R)-3-hydroxyacyl-CoA dehydratase 3 from Pongo abelii (Sumatran orangutan).